We begin with the raw amino-acid sequence, 245 residues long: Leucyl/phenylalanyl-tRNA--protein transferase (245 aa).

Belongs to the L/F-transferase family.

The protein localises to the cytoplasm. The enzyme catalyses N-terminal L-lysyl-[protein] + L-leucyl-tRNA(Leu) = N-terminal L-leucyl-L-lysyl-[protein] + tRNA(Leu) + H(+). It carries out the reaction N-terminal L-arginyl-[protein] + L-leucyl-tRNA(Leu) = N-terminal L-leucyl-L-arginyl-[protein] + tRNA(Leu) + H(+). It catalyses the reaction L-phenylalanyl-tRNA(Phe) + an N-terminal L-alpha-aminoacyl-[protein] = an N-terminal L-phenylalanyl-L-alpha-aminoacyl-[protein] + tRNA(Phe). Its function is as follows. Functions in the N-end rule pathway of protein degradation where it conjugates Leu, Phe and, less efficiently, Met from aminoacyl-tRNAs to the N-termini of proteins containing an N-terminal arginine or lysine. This Paraburkholderia xenovorans (strain LB400) protein is Leucyl/phenylalanyl-tRNA--protein transferase.